Consider the following 156-residue polypeptide: ATP synthase subunit b (156 aa).

The chain crosses the membrane as a helical span at residues 1–21 (MSINATLLIQIIAFVLLIWFV).

Belongs to the ATPase B chain family. In terms of assembly, F-type ATPases have 2 components, F(1) - the catalytic core - and F(0) - the membrane proton channel. F(1) has five subunits: alpha(3), beta(3), gamma(1), delta(1), epsilon(1). F(0) has three main subunits: a(1), b(2) and c(10-14). The alpha and beta chains form an alternating ring which encloses part of the gamma chain. F(1) is attached to F(0) by a central stalk formed by the gamma and epsilon chains, while a peripheral stalk is formed by the delta and b chains.

The protein localises to the cell inner membrane. Its function is as follows. F(1)F(0) ATP synthase produces ATP from ADP in the presence of a proton or sodium gradient. F-type ATPases consist of two structural domains, F(1) containing the extramembraneous catalytic core and F(0) containing the membrane proton channel, linked together by a central stalk and a peripheral stalk. During catalysis, ATP synthesis in the catalytic domain of F(1) is coupled via a rotary mechanism of the central stalk subunits to proton translocation. Component of the F(0) channel, it forms part of the peripheral stalk, linking F(1) to F(0). The chain is ATP synthase subunit b from Hydrogenovibrio crunogenus (strain DSM 25203 / XCL-2) (Thiomicrospira crunogena).